The chain runs to 337 residues: S-adenosylmethionine:tRNA ribosyltransferase-isomerase (337 aa).

It belongs to the QueA family. As to quaternary structure, monomer.

The protein resides in the cytoplasm. It carries out the reaction 7-aminomethyl-7-carbaguanosine(34) in tRNA + S-adenosyl-L-methionine = epoxyqueuosine(34) in tRNA + adenine + L-methionine + 2 H(+). It functions in the pathway tRNA modification; tRNA-queuosine biosynthesis. In terms of biological role, transfers and isomerizes the ribose moiety from AdoMet to the 7-aminomethyl group of 7-deazaguanine (preQ1-tRNA) to give epoxyqueuosine (oQ-tRNA). This is S-adenosylmethionine:tRNA ribosyltransferase-isomerase from Legionella pneumophila (strain Paris).